Here is a 319-residue protein sequence, read N- to C-terminus: Ribonucleoside-diphosphate reductase small chain (319 aa).

Residues F313–F319 form an interaction with R1 region.

This sequence belongs to the ribonucleoside diphosphate reductase small chain family. Interacts with RNR1/OPG080 subunit. Can interact with host RNR1 supunit. The cofactor is Fe cation.

The enzyme catalyses a 2'-deoxyribonucleoside 5'-diphosphate + [thioredoxin]-disulfide + H2O = a ribonucleoside 5'-diphosphate + [thioredoxin]-dithiol. In terms of biological role, ribonucleoside-diphosphate reductase holoenzyme provides the precursors necessary for viral DNA synthesis. Allows virus growth in non-dividing cells. Catalyzes the biosynthesis of deoxyribonucleotides from the corresponding ribonucleotides. The polypeptide is Ribonucleoside-diphosphate reductase small chain (OPG048) (Cynomys gunnisoni (Gunnison's prairie dog)).